A 306-amino-acid chain; its full sequence is Histone-lysine N-methyltransferase SETMAR (306 aa).

Positions 60-123 constitute a Pre-SET domain; the sequence is PGCACLKTPC…RCRNRVVQWG (64 aa). Positions 62, 64, 69, 74, 76, 105, 109, 111, and 115 each coordinate Zn(2+). The SET domain occupies 126 to 250; it reads FHLQVFKTDH…PEEELSYDYS (125 aa). S-adenosyl-L-methionine contacts are provided by residues 136-138, Tyr179, Arg207, and 210-211; these read KGW and NH. The Zn(2+) site is built by Cys213, Cys274, Cys276, and Cys281. The 17-residue stretch at 270–286 folds into the Post-SET domain; that stretch reads LRKPCYCGARSCAAFLP.

Belongs to the class V-like SAM-binding methyltransferase superfamily.

Its subcellular location is the nucleus. It localises to the chromosome. The catalysed reaction is L-lysyl(36)-[histone H3] + 2 S-adenosyl-L-methionine = N(6),N(6)-dimethyl-L-lysyl(36)-[histone H3] + 2 S-adenosyl-L-homocysteine + 2 H(+). In terms of biological role, histone methyltransferase that methylates 'Lys-4' and 'Lys-36' of histone H3, 2 specific tags for epigenetic transcriptional activation. Specifically mediates dimethylation of H3 'Lys-36'. This is Histone-lysine N-methyltransferase SETMAR from Bos taurus (Bovine).